Reading from the N-terminus, the 272-residue chain is MDSNNTEFKDNYQHIPDDIPLTNIKLPNEWVLYLYDKQLFKKMANRPNFQAKPHKALCTISTVNDLLYIMELMKVNNDPKIKSVETDGKINLDANDYIIMRKGIEPIWEDPRNSNGGTFTVKMDHSKGYDVWKIFIQYILGETLTSEISDMKSINGITVSYISDSYNFQNPASKNTLGNTLGNSLGNSLGNGLGNSFTYIKIWDGKPDRTRDQFVSMLPATIIDKIKSDSLMYSQNSKKKHFNEKNIIGKLNSGRKPSNTRGGFSSFGNKRY.

The segment at 249-272 (GKLNSGRKPSNTRGGFSSFGNKRY) is disordered. The segment covering 255–272 (RKPSNTRGGFSSFGNKRY) has biased composition (polar residues).

It belongs to the eukaryotic initiation factor 4E family.

In terms of biological role, recognizes and binds the 7-methylguanosine-containing mRNA cap during an early step in the initiation of protein synthesis and facilitates ribosome binding by inducing the unwinding of the mRNAs secondary structures. The sequence is that of Eukaryotic translation initiation factor 4E homolog from Acanthamoeba polyphaga mimivirus (APMV).